Reading from the N-terminus, the 64-residue chain is MAHPSQLGFQDAASPMMEELLHFHDHALMVVFLISTFVLYIILTMLTTKLTDKLILESHEIEII.

Over 1 to 14 (MAHPSQLGFQDAAS) the chain is Mitochondrial intermembrane. A helical transmembrane segment spans residues 15–45 (PMMEELLHFHDHALMVVFLISTFVLYIILTM). At 46 to 64 (LTTKLTDKLILESHEIEII) the chain is on the mitochondrial matrix side.

This sequence belongs to the cytochrome c oxidase subunit 2 family. In terms of assembly, component of the cytochrome c oxidase (complex IV, CIV), a multisubunit enzyme composed of 14 subunits. The complex is composed of a catalytic core of 3 subunits MT-CO1, MT-CO2 and MT-CO3, encoded in the mitochondrial DNA, and 11 supernumerary subunits COX4I, COX5A, COX5B, COX6A, COX6B, COX6C, COX7A, COX7B, COX7C, COX8 and NDUFA4, which are encoded in the nuclear genome. The complex exists as a monomer or a dimer and forms supercomplexes (SCs) in the inner mitochondrial membrane with NADH-ubiquinone oxidoreductase (complex I, CI) and ubiquinol-cytochrome c oxidoreductase (cytochrome b-c1 complex, complex III, CIII), resulting in different assemblies (supercomplex SCI(1)III(2)IV(1) and megacomplex MCI(2)III(2)IV(2)). Found in a complex with TMEM177, COA6, COX18, COX20, SCO1 and SCO2. Interacts with TMEM177 in a COX20-dependent manner. Interacts with COX20. Interacts with COX16. Requires Cu cation as cofactor.

It localises to the mitochondrion inner membrane. It catalyses the reaction 4 Fe(II)-[cytochrome c] + O2 + 8 H(+)(in) = 4 Fe(III)-[cytochrome c] + 2 H2O + 4 H(+)(out). Component of the cytochrome c oxidase, the last enzyme in the mitochondrial electron transport chain which drives oxidative phosphorylation. The respiratory chain contains 3 multisubunit complexes succinate dehydrogenase (complex II, CII), ubiquinol-cytochrome c oxidoreductase (cytochrome b-c1 complex, complex III, CIII) and cytochrome c oxidase (complex IV, CIV), that cooperate to transfer electrons derived from NADH and succinate to molecular oxygen, creating an electrochemical gradient over the inner membrane that drives transmembrane transport and the ATP synthase. Cytochrome c oxidase is the component of the respiratory chain that catalyzes the reduction of oxygen to water. Electrons originating from reduced cytochrome c in the intermembrane space (IMS) are transferred via the dinuclear copper A center (CU(A)) of subunit 2 and heme A of subunit 1 to the active site in subunit 1, a binuclear center (BNC) formed by heme A3 and copper B (CU(B)). The BNC reduces molecular oxygen to 2 water molecules using 4 electrons from cytochrome c in the IMS and 4 protons from the mitochondrial matrix. This chain is Cytochrome c oxidase subunit 2 (mt-co2), found in Geophagus steindachneri (Red hump earth eater).